Consider the following 948-residue polypeptide: MDKTYQPHAIETSWYQTWESENYFAPQGVGDSYTIMIPPPNVTGSLHMGHGFNNAIMDALIRFRRMQGRNTLWQPGTDHAGIATQMLVERRLEAQGVSRHELGREKFLDKIWEWKAESGGNISRQIRRLGSSVDWSRERFTMDDGLSEAVKEAFVRLHEDGLIYRGKRLVNWDTKLHTAISDLEVENHDEKGHLWNLRYPLADGAKTAEGLDYLIVATTRPETMLGDAAVAVNPEDERYKALIGKFVELPLVGRRIPIIADDYCDPEFGTGCVKITPAHDFNDYEVGKRHNLPLLNIFDKNANVLPAAQVFNLDGTLNESVDGSLPAAYAGLDRFEARKQIVAAFDAAGLLVSVDDHALKVPKGDRSGTIIEPWLTDQWYVSTKPLAEPAIAAVEDGRIAFVPKQYENMYFSWMRDIQDWCISRQLWWGHRIPAWYDESGKVYVGRDEAEVRAKNNLGPEVALQQDNDVLDTWFSSGLWTFSTLGWPEKTKALKTFHSTDVLVTGFDIIFFWVARMIMLTMHLVKNEDGTPQVPFKTVYVHGLVRDGQGQKMSKSKGNVLDPLDIVDGIDLETLVEKRTSGLMQPQLAKKIEKQTRQEFADGIASYGTDALRFTFCSLASTGRDIKFDMGRVEGYRNFCNKIWNAARYVLDKGEDCGQNGEAVELSLADRWIISQLQRTEAEVTRQLDQFRFDLAAQALYEFIWNQYCDWYLELSKPVLWDETAPVERQRGTRRTLVRVLEVALRLAHPFMPFITEEIWQRLAPLAGAQGKTIMLQPWPVANEARIDQAAEDDIEWLKGLMLAVRNIRGEMNIGPGKPLQLFLKNVSAEDQRRLSENDYLLKKLAKLESMTVLTEGAEAPLSATALVGDMEVLVPMAGLIDKGAELARLDKEIQRLQGEVQRVGGKLSNAAFVDKAPPEVIAKERAKLTEAEQALGKLAEQHARIASL.

The 'HIGH' region motif lies at 40-50; sequence PNVTGSLHMGH. The short motif at 551 to 555 is the 'KMSKS' region element; the sequence is KMSKS. Lys554 is an ATP binding site. The stretch at 879–945 forms a coiled coil; sequence LIDKGAELAR…GKLAEQHARI (67 aa).

It belongs to the class-I aminoacyl-tRNA synthetase family. ValS type 1 subfamily. As to quaternary structure, monomer.

Its subcellular location is the cytoplasm. The enzyme catalyses tRNA(Val) + L-valine + ATP = L-valyl-tRNA(Val) + AMP + diphosphate. Functionally, catalyzes the attachment of valine to tRNA(Val). As ValRS can inadvertently accommodate and process structurally similar amino acids such as threonine, to avoid such errors, it has a 'posttransfer' editing activity that hydrolyzes mischarged Thr-tRNA(Val) in a tRNA-dependent manner. This chain is Valine--tRNA ligase, found in Pseudomonas syringae pv. syringae (strain B728a).